We begin with the raw amino-acid sequence, 288 residues long: 4-hydroxy-tetrahydrodipicolinate synthase (288 aa).

Position 47 (T47) interacts with pyruvate. The Proton donor/acceptor role is filled by Y136. Residue K164 is the Schiff-base intermediate with substrate of the active site. I204 contacts pyruvate.

Belongs to the DapA family. In terms of assembly, homotetramer; dimer of dimers.

The protein localises to the cytoplasm. The enzyme catalyses L-aspartate 4-semialdehyde + pyruvate = (2S,4S)-4-hydroxy-2,3,4,5-tetrahydrodipicolinate + H2O + H(+). The protein operates within amino-acid biosynthesis; L-lysine biosynthesis via DAP pathway; (S)-tetrahydrodipicolinate from L-aspartate: step 3/4. Functionally, catalyzes the condensation of (S)-aspartate-beta-semialdehyde [(S)-ASA] and pyruvate to 4-hydroxy-tetrahydrodipicolinate (HTPA). In Leuconostoc mesenteroides subsp. mesenteroides (strain ATCC 8293 / DSM 20343 / BCRC 11652 / CCM 1803 / JCM 6124 / NCDO 523 / NBRC 100496 / NCIMB 8023 / NCTC 12954 / NRRL B-1118 / 37Y), this protein is 4-hydroxy-tetrahydrodipicolinate synthase.